Reading from the N-terminus, the 427-residue chain is Nuclear distribution protein PAC1-2 (427 aa).

One can recognise a LisH domain in the interval 8–40 (QKDDLNKSIAEYLYAQDLTEIADSLCARLSLDY). A coiled-coil region spans residues 58–82 (SVIRLQKKLIESENRYTALQEDIAA). 7 WD repeats span residues 106–147 (SHRA…RTLK), 149–187 (HTRE…NAGY), 194–233 (GHEH…CIRT), 236–275 (GHED…MKME), 278–336 (GHGH…ELRT), 339–378 (GHND…CMXV), and 381–420 (AHSH…SRIM).

The protein belongs to the WD repeat LIS1/nudF family. In terms of assembly, self-associates. Interacts with NDL1 and dynein.

It localises to the cytoplasm. It is found in the cytoskeleton. The protein localises to the spindle pole. Its function is as follows. Positively regulates the activity of the minus-end directed microtubule motor protein dynein. May enhance dynein-mediated microtubule sliding by targeting dynein to the microtubule plus end. Required for nuclear migration during vegetative growth as well as development. Required for retrograde early endosome (EE) transport from the hyphal tip. Required for localization of dynein to the mitotic spindle poles. Recruits additional proteins to the dynein complex at SPBs. This is Nuclear distribution protein PAC1-2 from Postia placenta (strain ATCC 44394 / Madison 698-R) (Brown rot fungus).